Consider the following 166-residue polypeptide: MSEAIIAKKAEQVELIAEKMKAAASIVVVDSRGLTVEQDTNLRRSLRESDVEFKVIKNSILIRAAEKAGLEDLKELFVGPSAVAFSNEDVIAPAKVISDFAKDAEALEIKGGSVDGKFTSVEEINALAKLPNKEGMLSMLLSVLQAPVRNVAYAVKAVAEKDEEVA.

This sequence belongs to the universal ribosomal protein uL10 family. In terms of assembly, part of the ribosomal stalk of the 50S ribosomal subunit. The N-terminus interacts with L11 and the large rRNA to form the base of the stalk. The C-terminus forms an elongated spine to which L12 dimers bind in a sequential fashion forming a multimeric L10(L12)X complex.

Its function is as follows. Forms part of the ribosomal stalk, playing a central role in the interaction of the ribosome with GTP-bound translation factors. This chain is Large ribosomal subunit protein uL10, found in Streptococcus agalactiae serotype III (strain NEM316).